A 115-amino-acid polypeptide reads, in one-letter code: Non-specific lipid-transfer protein 3 (115 aa).

The signal sequence occupies residues 1–23; it reads MAFALRFFTCLVLTVCIVASVDA. 4 disulfide bridges follow: Cys27-Cys74, Cys37-Cys51, Cys52-Cys97, and Cys72-Cys111.

The protein belongs to the plant LTP family.

Its function is as follows. Plant non-specific lipid-transfer proteins transfer phospholipids as well as galactolipids across membranes. May play a role in wax or cutin deposition in the cell walls of expanding epidermal cells and certain secretory tissues. This is Non-specific lipid-transfer protein 3 (LTP3) from Arabidopsis thaliana (Mouse-ear cress).